Consider the following 445-residue polypeptide: uncharacterized protein (445 aa).

8 helical membrane-spanning segments follow: residues 16–36, 52–72, 98–118, 168–188, 219–239, 243–263, 283–303, and 366–386; these read IVSLGVTASSFLFINGVAFLI, LLASMPSWGLVVTMFAWGYLL, VHSLLWIGVFLFLGGMAAGGC, GLMFPAVVCTLAAVASVLGIV, ASALLMMPQTVTVTFMLVWLI, GWSVAQAGVLVTISQLLGALG, LIAAAAAATLFLLAAVDNEGS, and AAYPTAWALCGVFPLAAVPLV. The segment at 417–445 is disordered; the sequence is AWPNGPRRPGPPGQPRRVRQGGTAITPPT.

The protein belongs to the major facilitator superfamily.

It is found in the cell membrane. This is an uncharacterized protein from Mycobacterium tuberculosis (strain CDC 1551 / Oshkosh).